The chain runs to 434 residues: Fc receptor-like protein 6 (434 aa).

A signal peptide spans 1–19; it reads MLLWTAVLLFVPCVGKTVW. 3 consecutive Ig-like C2-type domains span residues 20–95, 111–197, and 207–293; these read LYLQ…QTFT, PPVL…PQLE, and PVLT…KKLS. Over 20-307 the chain is Extracellular; that stretch reads LYLQAWPNPV…QVLFTPASNW (288 aa). Cystine bridges form between Cys39–Cys83, Cys132–Cys180, and Cys228–Cys276. N-linked (GlcNAc...) asparagine glycosylation occurs at Asn65. Asn273 carries an N-linked (GlcNAc...) asparagine glycan. The helical transmembrane segment at 308–328 threads the bilayer; it reads LVPWLPASLLGLMVIAAALLV. Residues 329–434 are Cytoplasmic-facing; sequence YVRSWRKAGP…PLSDCEEVLC (106 aa). Positions 369 to 374 match the ITIM motif motif; sequence VVYSVV. Residue Tyr371 is modified to Phosphotyrosine.

As to quaternary structure, interacts (tyrosine phosphorylated) with PTPN11. Interacts (tyrosine phosphorylated) with PTPN6, INPP5D, INPPL1 and GRB2. Interacts with class II MHC HLA-DR when the alpha chain is associated with a beta-1, beta-4 or a beta-5 but not a beta-3 chain. In terms of processing, phosphorylated on Tyr residues. Tyrosine phosphorylation induces association with phosphatase PTPN11, PTPN6, INPP5D, INPPL1 and GRB2. Expressed by cytolytic cells including NK cells, effector and effector-memory CD8(+) T-cells, and a subset of NKT cells (at protein level). Also expressed in gamma delta T cells and in a rare subset of effector CD4(+) T-cells (at protein level). Expressed in spleen, skin, peripheral blood leukocytes, liver, lung, bone marrow, small intestine and placenta. Expression among T-cells is greatly expanded in HIV-1 infected individuals, and includes not only effector and effector-memory CD8(+) T-cells but also populations of CD4(+) T-cells. Expression among CD8(+) T-cells and NK cells is expanded in individuals with chronic lymphocytic leukemia (CLL) but is reduced in PBMCs from patients with acute (AML), chronic myeloid leukemia (CML) and non-Hodgkin's lymphoma. Expression is higher in PBMCs and/or CD3(+) cells of patients with autoimmune diseases, such as rheumatoid arthritis (RA), systemic lupus erythematosus (SLE) and idiopathic thrombocytopenia purpura (ITP). In contrast, expression in CD3(+) cells from patients with lupus anticoagulans (LA) is higher.

Its subcellular location is the cell membrane. Functionally, acts as a MHC class II receptor. When stimulated on its own, does not play a role in cytokine production or the release of cytotoxic granules by NK cells and cytotoxic CD8(+) T cells. Does not act as an Fc receptor. This chain is Fc receptor-like protein 6 (FCRL6), found in Homo sapiens (Human).